Here is a 315-residue protein sequence, read N- to C-terminus: Manganese-dependent 2,3-dihydroxybiphenyl 1,2-dioxygenase (315 aa).

2 consecutive VOC domains span residues 7–121 (KFGH…IYYD) and 150–273 (RIDH…LFSG). Mn(2+) contacts are provided by histidine 153, histidine 216, and glutamate 269.

This sequence belongs to the extradiol ring-cleavage dioxygenase family. Homotetramer. Requires Mn(2+) as cofactor.

It catalyses the reaction biphenyl-2,3-diol + O2 = 2-hydroxy-6-oxo-6-phenylhexa-2,4-dienoate + H(+). Its pathway is xenobiotic degradation; biphenyl degradation; 2-hydroxy-2,4-pentadienoate and benzoate from biphenyl: step 3/4. Functionally, catalyzes the meta-cleavage of the hydroxylated biphenyl ring. The enzyme can oxidize a wide range of substrates, and the substrate preference order is 2,3-dihydroxybiphenyl &gt; 3-methylcatechol &gt; catechol &gt; 4-methylcatechol &gt; 4-chlorocatechol. This Geobacillus genomosp. 3 protein is Manganese-dependent 2,3-dihydroxybiphenyl 1,2-dioxygenase (bphC).